A 185-amino-acid polypeptide reads, in one-letter code: ATP synthase subunit delta (185 aa).

The protein belongs to the ATPase delta chain family. As to quaternary structure, F-type ATPases have 2 components, F(1) - the catalytic core - and F(0) - the membrane proton channel. F(1) has five subunits: alpha(3), beta(3), gamma(1), delta(1), epsilon(1). CF(0) has four main subunits: a(1), b(1), b'(1) and c(10-14). The alpha and beta chains form an alternating ring which encloses part of the gamma chain. F(1) is attached to F(0) by a central stalk formed by the gamma and epsilon chains, while a peripheral stalk is formed by the delta, b and b' chains.

The protein localises to the cellular thylakoid membrane. In terms of biological role, f(1)F(0) ATP synthase produces ATP from ADP in the presence of a proton or sodium gradient. F-type ATPases consist of two structural domains, F(1) containing the extramembraneous catalytic core and F(0) containing the membrane proton channel, linked together by a central stalk and a peripheral stalk. During catalysis, ATP synthesis in the catalytic domain of F(1) is coupled via a rotary mechanism of the central stalk subunits to proton translocation. Its function is as follows. This protein is part of the stalk that links CF(0) to CF(1). It either transmits conformational changes from CF(0) to CF(1) or is implicated in proton conduction. This is ATP synthase subunit delta from Crocosphaera subtropica (strain ATCC 51142 / BH68) (Cyanothece sp. (strain ATCC 51142)).